The sequence spans 119 residues: Large ribosomal subunit protein bL19 (119 aa).

It belongs to the bacterial ribosomal protein bL19 family.

Functionally, this protein is located at the 30S-50S ribosomal subunit interface and may play a role in the structure and function of the aminoacyl-tRNA binding site. The protein is Large ribosomal subunit protein bL19 of Pseudarthrobacter chlorophenolicus (strain ATCC 700700 / DSM 12829 / CIP 107037 / JCM 12360 / KCTC 9906 / NCIMB 13794 / A6) (Arthrobacter chlorophenolicus).